The chain runs to 156 residues: Peroxisomal membrane associated protein 20 (156 aa).

One can recognise a Thioredoxin domain in the interval 2–156 (VAVGSTLPKV…SSADKVLSSL (155 aa)). Cysteine 43 functions as the Cysteine sulfenic acid (-SOH) intermediate in the catalytic mechanism.

Belongs to the peroxiredoxin family. Prx5 subfamily. As to quaternary structure, homodimer; disulfide-linked, upon oxidation.

The protein localises to the cytoplasm. Its subcellular location is the nucleus. In terms of biological role, may act as a chaperone rather than a peroxidase. Has no thioredoxin-dependent peroxidase activity. Shows weak chaperone activity. In Schizosaccharomyces pombe (strain 972 / ATCC 24843) (Fission yeast), this protein is Peroxisomal membrane associated protein 20.